We begin with the raw amino-acid sequence, 333 residues long: GTP 3',8-cyclase (333 aa).

The region spanning 7–221 (KFGRVHDYIR…FEACNEAGYE (215 aa)) is the Radical SAM core domain. Arg-16 serves as a coordination point for GTP. The [4Fe-4S] cluster site is built by Cys-23 and Cys-27. Tyr-29 provides a ligand contact to S-adenosyl-L-methionine. Residue Cys-30 participates in [4Fe-4S] cluster binding. Residue Arg-66 coordinates GTP. Gly-70 is a binding site for S-adenosyl-L-methionine. Thr-97 is a GTP binding site. Ser-121 contributes to the S-adenosyl-L-methionine binding site. Lys-158 provides a ligand contact to GTP. Met-192 contacts S-adenosyl-L-methionine. Residues Cys-257 and Cys-260 each contribute to the [4Fe-4S] cluster site. Residue 262–264 (RLR) coordinates GTP. Cys-274 serves as a coordination point for [4Fe-4S] cluster.

Belongs to the radical SAM superfamily. MoaA family. Monomer and homodimer. [4Fe-4S] cluster is required as a cofactor.

The catalysed reaction is GTP + AH2 + S-adenosyl-L-methionine = (8S)-3',8-cyclo-7,8-dihydroguanosine 5'-triphosphate + 5'-deoxyadenosine + L-methionine + A + H(+). Its pathway is cofactor biosynthesis; molybdopterin biosynthesis. In terms of biological role, catalyzes the cyclization of GTP to (8S)-3',8-cyclo-7,8-dihydroguanosine 5'-triphosphate. This Listeria monocytogenes serotype 4b (strain CLIP80459) protein is GTP 3',8-cyclase.